The following is a 400-amino-acid chain: Elongation factor Tu (400 aa).

The 201-residue stretch at 10 to 210 (KPHINVGTIG…ALDEYIPEPK (201 aa)) folds into the tr-type G domain. Positions 19 to 26 (GHVDHGKT) are G1. 19-26 (GHVDHGKT) provides a ligand contact to GTP. Mg(2+) is bound at residue Thr-26. The G2 stretch occupies residues 64 to 68 (GITIA). A G3 region spans residues 85–88 (DCPG). Residues 85-89 (DCPGH) and 140-143 (NKAD) contribute to the GTP site. Positions 140–143 (NKAD) are G4. The tract at residues 178 to 180 (SAL) is G5.

The protein belongs to the TRAFAC class translation factor GTPase superfamily. Classic translation factor GTPase family. EF-Tu/EF-1A subfamily. In terms of assembly, monomer.

The protein localises to the cytoplasm. The enzyme catalyses GTP + H2O = GDP + phosphate + H(+). Functionally, GTP hydrolase that promotes the GTP-dependent binding of aminoacyl-tRNA to the A-site of ribosomes during protein biosynthesis. This chain is Elongation factor Tu, found in Rubrobacter xylanophilus (strain DSM 9941 / JCM 11954 / NBRC 16129 / PRD-1).